The sequence spans 546 residues: Zinc finger and BTB domain-containing protein 7A (546 aa).

Positions 34 to 101 (CDVVILVEGQ…AYTATLTVST (68 aa)) constitute a BTB domain. The disordered stretch occupies residues 189 to 288 (QEDEEEPDCN…SFVPTGAEAE (100 aa)). 3 consecutive C2H2-type zinc fingers follow at residues 359 to 381 (QKCP…IRTH), 387 to 409 (YECN…MRKH), and 415 to 437 (YLCQ…MRVH). Residues 443 to 467 (YQCDSCFKTFVRSDHLHRHLKKDGC) form a C2H2-type 4; atypical zinc finger. The tract at residues 463–546 (KKDGCNGIPS…AAEGSAPGPS (84 aa)) is disordered. Residues 534 to 546 (AGGAAEGSAPGPS) are compositionally biased toward low complexity.

The protein resides in the nucleus. Transcription factor that represses the transcription of a wide range of genes involved in cell proliferation and differentiation. Directly and specifically binds to the consensus sequence 5'-[GA][CA]GACCCCCCCCC-3' and represses transcription both by regulating the organization of chromatin and through the direct recruitment of transcription factors to gene regulatory regions. May also play a role, independently of its transcriptional activity, in double-strand break repair via classical non-homologous end joining/cNHEJ and in alternative splicing. The polypeptide is Zinc finger and BTB domain-containing protein 7A (Gallus gallus (Chicken)).